The following is an 808-amino-acid chain: Homeobox-leucine zipper protein HDG1 (808 aa).

The tract at residues 57–121 (LQTNGEMSRN…KRYHRHTPKQ (65 aa)) is disordered. Residues 79-90 (SRGEDVESRSES) show a composition bias toward basic and acidic residues. The segment covering 108-119 (LKKKKRYHRHTP) has biased composition (basic residues). Residues 110–169 (KKKRYHRHTPKQIQDLESVFKECAHPDEKQRLDLSRRLNLDPRQVKFWFQNRRTQMKTQI) constitute a DNA-binding region (homeobox). Positions 158–233 (FQNRRTQMKT…SRLKDELDRV (76 aa)) form a coiled coil. Positions 310–541 (DFDQRSRYLD…LQRQCECLTI (232 aa)) constitute an START domain.

This sequence belongs to the HD-ZIP homeobox family. Class IV subfamily. Interacts with CFL1. Binds with BBM. As to expression, expressed in trichomes forming at the base of young leaves, in endodermal cell lines around emergent lateral roots and in the epidermal layer of the stamen filament.

Its subcellular location is the nucleus. Probable transcription factor. Promotes cuticle development probably by modulating the expression of the downstream genes BDG and FDH, possibly repressed in a CFL1-dependent manner. Involved, together with PDF2, in the regulation of flower organs development by promoting the expression of APETALA 3 (AP3) in the epidermis and internal cell layers of developing flowers. In opposition to BBM, seems to promote cell differentiation and giant cell identity via transcriptional repression of meristem and cell proliferation genes. The sequence is that of Homeobox-leucine zipper protein HDG1 from Arabidopsis thaliana (Mouse-ear cress).